The sequence spans 882 residues: Pyruvate dehydrogenase E1 component (882 aa).

As to quaternary structure, homodimer. Part of the PDH complex, consisting of multiple copies of pyruvate dehydrogenase (E1), dihydrolipoamide acetyltransferase (E2) and lipoamide dehydrogenase (E3). Thiamine diphosphate is required as a cofactor.

It carries out the reaction N(6)-[(R)-lipoyl]-L-lysyl-[protein] + pyruvate + H(+) = N(6)-[(R)-S(8)-acetyldihydrolipoyl]-L-lysyl-[protein] + CO2. In terms of biological role, component of the pyruvate dehydrogenase (PDH) complex, that catalyzes the overall conversion of pyruvate to acetyl-CoA and CO(2). This is Pyruvate dehydrogenase E1 component (aceE) from Pseudomonas aeruginosa (strain ATCC 15692 / DSM 22644 / CIP 104116 / JCM 14847 / LMG 12228 / 1C / PRS 101 / PAO1).